We begin with the raw amino-acid sequence, 726 residues long: MSMSDDTHNSLSTGKCPFHQGSHDRSAGAGTSSHDWWPNQLRVDLLNQHSNRSNPLGEDFDYRKEFSKLDYSALKGDLKALLSDSQPWWPADWGSYAGLFIRMAWHGAGTYRSVDGRGGAGRGQQRFAPLNSWPDNVSLDKARRLLWPIKQKYGQKISWADLFILAGNVALENSGFRTFGFGAGREDVWEPDLDVNWGDEKAWLTHRHPEALAKAPLGATEMGLIYVNPEGPDHSGEPLSAAAAIRATFGNMGMNDEETVALIGGGHTLGKTHGAAAASHVGVDPEAAPIELQGLGWSSDYGSGAGGDAITSGLEVVWSQTPTQWSNYFFENLFKYEWVQTRSPAGAIQFEAVDAPEIIPDPFDPSKKRKPTMLVTDLTLRFDPEFEKISRRFLNDPQAFNEAFARAWFKLTHRDMGPKARYIGPEVPKEDLIWQDPLPQPVFNPSQEDIVNLKAAIAASGLSVSELVSVAWASASTFRGGDKRGGANGARLALAPQRDWDVNAAAARVLPVLEEIQKSSGKASLADIIVLAGVVGVEQAASAAGVSISVPFAPGRVDARQDQTDIEMFELLEPIADGFRNYRARLDVSTTESLLIDKAQQLTLTAPEMTALVGGMRVLGANFDGSQNGVFTDRPGVLSNDFFVNLLDMRNEWKAADESKELFEGRDRLSGEVKFTATRADLVFGSNSVLRALAEVYASSDAREKFVKDFVAAWVKVMNLDRFDLL.

A disordered region spans residues 1–34; sequence MSMSDDTHNSLSTGKCPFHQGSHDRSAGAGTSSH. The tryptophyl-tyrosyl-methioninium (Trp-Tyr) (with M-252) cross-link spans 105–226; sequence WHGAGTYRSV…LGATEMGLIY (122 aa). The active-site Proton acceptor is His-106. The segment at residues 226–252 is a cross-link (tryptophyl-tyrosyl-methioninium (Tyr-Met) (with W-105)); sequence YVNPEGPDHSGEPLSAAAAIRATFGNM. His-267 is a binding site for heme b.

Belongs to the peroxidase family. Peroxidase/catalase subfamily. As to quaternary structure, homodimer or homotetramer. Heme b serves as cofactor. Post-translationally, formation of the three residue Trp-Tyr-Met cross-link is important for the catalase, but not the peroxidase activity of the enzyme.

It catalyses the reaction H2O2 + AH2 = A + 2 H2O. It carries out the reaction 2 H2O2 = O2 + 2 H2O. Its function is as follows. Bifunctional enzyme with both catalase and broad-spectrum peroxidase activity. This chain is Catalase-peroxidase, found in Citrobacter koseri (strain ATCC BAA-895 / CDC 4225-83 / SGSC4696).